Reading from the N-terminus, the 81-residue chain is Photosystem I iron-sulfur center (81 aa).

2 consecutive 4Fe-4S ferredoxin-type domains span residues 2 to 31 and 39 to 68; these read SHTV…MAPW and VASA…VRVY. Residues cysteine 11, cysteine 14, cysteine 17, cysteine 21, cysteine 48, cysteine 51, cysteine 54, and cysteine 58 each contribute to the [4Fe-4S] cluster site.

The eukaryotic PSI reaction center is composed of at least 11 subunits. Requires [4Fe-4S] cluster as cofactor.

It is found in the plastid. Its subcellular location is the chloroplast thylakoid membrane. The catalysed reaction is reduced [plastocyanin] + hnu + oxidized [2Fe-2S]-[ferredoxin] = oxidized [plastocyanin] + reduced [2Fe-2S]-[ferredoxin]. Its function is as follows. Apoprotein for the two 4Fe-4S centers FA and FB of photosystem I (PSI); essential for photochemical activity. FB is the terminal electron acceptor of PSI, donating electrons to ferredoxin. The C-terminus interacts with PsaA/B/D and helps assemble the protein into the PSI complex. Required for binding of PsaD and PsaE to PSI. PSI is a plastocyanin/cytochrome c6-ferredoxin oxidoreductase, converting photonic excitation into a charge separation, which transfers an electron from the donor P700 chlorophyll pair to the spectroscopically characterized acceptors A0, A1, FX, FA and FB in turn. The polypeptide is Photosystem I iron-sulfur center (Tupiella akineta (Green alga)).